The following is a 177-amino-acid chain: ATP synthase subunit b (177 aa).

The chain crosses the membrane as a helical span at residues 29–49; it reads FFFVLAIFLIVLAVIGTFVVP.

It belongs to the ATPase B chain family. In terms of assembly, F-type ATPases have 2 components, F(1) - the catalytic core - and F(0) - the membrane proton channel. F(1) has five subunits: alpha(3), beta(3), gamma(1), delta(1), epsilon(1). F(0) has three main subunits: a(1), b(2) and c(10-14). The alpha and beta chains form an alternating ring which encloses part of the gamma chain. F(1) is attached to F(0) by a central stalk formed by the gamma and epsilon chains, while a peripheral stalk is formed by the delta and b chains.

It localises to the cell membrane. F(1)F(0) ATP synthase produces ATP from ADP in the presence of a proton or sodium gradient. F-type ATPases consist of two structural domains, F(1) containing the extramembraneous catalytic core and F(0) containing the membrane proton channel, linked together by a central stalk and a peripheral stalk. During catalysis, ATP synthesis in the catalytic domain of F(1) is coupled via a rotary mechanism of the central stalk subunits to proton translocation. Its function is as follows. Component of the F(0) channel, it forms part of the peripheral stalk, linking F(1) to F(0). This chain is ATP synthase subunit b, found in Mycolicibacterium paratuberculosis (strain ATCC BAA-968 / K-10) (Mycobacterium paratuberculosis).